The sequence spans 346 residues: N-acetyl-gamma-glutamyl-phosphate reductase (346 aa).

Cysteine 149 is a catalytic residue.

The protein belongs to the NAGSA dehydrogenase family. Type 1 subfamily.

It is found in the cytoplasm. It catalyses the reaction N-acetyl-L-glutamate 5-semialdehyde + phosphate + NADP(+) = N-acetyl-L-glutamyl 5-phosphate + NADPH + H(+). It functions in the pathway amino-acid biosynthesis; L-arginine biosynthesis; N(2)-acetyl-L-ornithine from L-glutamate: step 3/4. Functionally, catalyzes the NADPH-dependent reduction of N-acetyl-5-glutamyl phosphate to yield N-acetyl-L-glutamate 5-semialdehyde. This chain is N-acetyl-gamma-glutamyl-phosphate reductase, found in Micrococcus luteus (strain ATCC 4698 / DSM 20030 / JCM 1464 / CCM 169 / CCUG 5858 / IAM 1056 / NBRC 3333 / NCIMB 9278 / NCTC 2665 / VKM Ac-2230) (Micrococcus lysodeikticus).